The following is a 784-amino-acid chain: Cadherin-15 (784 aa).

A signal peptide spans 1 to 21; it reads MGSALLLALGLLAQSLGLSWA. A propeptide spanning residues 22–59 is cleaved from the precursor; sequence VPEPKPSTLYPWRRASAPGRVRRAWVIPPISVSENHKR. Cadherin domains are found at residues 60-151, 152-259, 260-374, 375-480, and 481-589; these read LPYP…RPAF, LQDV…APEF, TKDE…APVF, PENP…DHAP, and ALAL…TCLP. Over 60–605 the chain is Extracellular; the sequence is LPYPLVQIKS…GGGVGVSLGA (546 aa). 2 N-linked (GlcNAc...) asparagine glycosylation sites follow: Asn106 and Asn226. Residues Asn530, Asn537, and Asn575 are each glycosylated (N-linked (GlcNAc...) asparagine). Residues 606–625 traverse the membrane as a helical segment; sequence LVIVLASTVVLLVLILLAAL. Residues 626 to 784 lie on the Cytoplasmic side of the membrane; sequence RTRFRGHSRG…ARLADMYGHQ (159 aa). A disordered region spans residues 676–700; that stretch reads EPRATSRSLGRPPLRRDAPFSYVPQ.

Skeletal muscle.

It localises to the cell membrane. In terms of biological role, cadherins are calcium-dependent cell adhesion proteins. They preferentially interact with themselves in a homophilic manner in connecting cells; cadherins may thus contribute to the sorting of heterogeneous cell types. M-cadherin is part of the myogenic program and may provide a trigger for terminal muscle differentiation. This is Cadherin-15 (Cdh15) from Mus musculus (Mouse).